Consider the following 103-residue polypeptide: Protein Rev (103 aa).

Ser5 bears the Phosphoserine; by host CK2 mark. Residues 17-25 (IIKILYQSN) are homomultimerization. 2 disordered regions span residues 24–49 (SNPC…RRQA) and 82–103 (IRDP…TKDN). The Nuclear localization signal and RNA-binding (RRE) signature appears at 33–49 (SRNARKNRRRRWRRRQA). Residues 35 to 48 (NARKNRRRRWRRRQ) show a composition bias toward basic residues. The Nuclear export signal and binding to XPO1 motif lies at 72–83 (VDLPPLEQLNIR).

The protein belongs to the HIV-1 REV protein family. Homomultimer; when bound to the RRE. Multimeric assembly is essential for activity and may involve XPO1. Binds to human KPNB1, XPO1, TNPO1, RANBP5 and IPO7. Interacts with the viral Integrase. Interacts with human KHDRBS1. Interacts with human NAP1; this interaction decreases Rev multimerization and stimulates its activity. Interacts with human DEAD-box helicases DDX3 and DDX24; these interactions may serve for viral RNA export to the cytoplasm and packaging, respectively. Interacts with human PSIP1; this interaction may inhibit HIV-1 DNA integration by promoting dissociation of the Integrase-LEDGF/p75 complex. Post-translationally, asymmetrically arginine dimethylated at one site by host PRMT6. Methylation impairs the RNA-binding activity and export of viral RNA from the nucleus to the cytoplasm. In terms of processing, phosphorylated by protein kinase CK2. Presence of, and maybe binding to the N-terminus of the regulatory beta subunit of CK2 is necessary for CK2-mediated Rev's phosphorylation.

Its subcellular location is the host nucleus. It is found in the host nucleolus. It localises to the host cytoplasm. In terms of biological role, escorts unspliced or incompletely spliced viral pre-mRNAs (late transcripts) out of the nucleus of infected cells. These pre-mRNAs carry a recognition sequence called Rev responsive element (RRE) located in the env gene, that is not present in fully spliced viral mRNAs (early transcripts). This function is essential since most viral proteins are translated from unspliced or partially spliced pre-mRNAs which cannot exit the nucleus by the pathway used by fully processed cellular mRNAs. Rev itself is translated from a fully spliced mRNA that readily exits the nucleus. Rev's nuclear localization signal (NLS) binds directly to KPNB1/Importin beta-1 without previous binding to KPNA1/Importin alpha-1. KPNB1 binds to the GDP bound form of RAN (Ran-GDP) and targets Rev to the nucleus. In the nucleus, the conversion from Ran-GDP to Ran-GTP dissociates Rev from KPNB1 and allows Rev's binding to the RRE in viral pre-mRNAs. Rev multimerization on the RRE via cooperative assembly exposes its nuclear export signal (NES) to the surface. Rev can then form a complex with XPO1/CRM1 and Ran-GTP, leading to nuclear export of the complex. Conversion from Ran-GTP to Ran-GDP mediates dissociation of the Rev/RRE/XPO1/RAN complex, so that Rev can return to the nucleus for a subsequent round of export. Beside KPNB1, also seems to interact with TNPO1/Transportin-1, RANBP5/IPO5 and IPO7/RANBP7 for nuclear import. The nucleoporin-like HRB/RIP is an essential cofactor that probably indirectly interacts with Rev to release HIV RNAs from the perinuclear region to the cytoplasm. This chain is Protein Rev, found in Human immunodeficiency virus type 1 group O (isolate MVP5180) (HIV-1).